A 293-amino-acid polypeptide reads, in one-letter code: SAGA-associated factor 29 (293 aa).

Residues 3-88 adopt a coiled-coil conformation; it reads LVSADSRIAE…KALDKIAEIK (86 aa). Residues 152–293 enclose the SGF29 C-terminal domain; that stretch reads GDYVAKPGDK…VVACKEPKKK (142 aa). Histone H3K4me3 N-terminus binding regions lie at residues 194 to 196 and 240 to 243; these read DID and QTTC. The segment at 264 to 266 is histone H3K4me3 binding; that stretch reads FED. Position 288 is an N6-acetyllysine (Lys288).

This sequence belongs to the SGF29 family. In terms of assembly, interacts with dimethylated and trimethylated 'Lys-4' of histone H3 (H3K4me2 and H3K4me3), with a preference for the trimethylated form (H3K4me3). Component of some SAGA-type complexes. Component of the ADA2A-containing complex (ATAC), composed of KAT14, KAT2A, TADA2L, TADA3L, ZZ3, MBIP, WDR5, YEATS2, CCDC101 and DR1. Interacts with (methylated) CGAS. Interacts with TADA3L, GCN5L2, SUPT3H and MYC. In terms of tissue distribution, widely expressed with highest levels in testis. Highly expressed in hepatoma and other tumor cell lines.

The protein resides in the nucleus. Chromatin reader component of some histone acetyltransferase (HAT) SAGA-type complexes like the TFTC-HAT, ATAC or STAGA complexes. SGF29 specifically recognizes and binds methylated 'Lys-4' of histone H3 (H3K4me), with a preference for trimethylated form (H3K4me3). In the SAGA-type complexes, SGF29 is required to recruit complexes to H3K4me. Involved in the response to endoplasmic reticulum (ER) stress by recruiting the SAGA complex to H3K4me, thereby promoting histone H3 acetylation and cell survival. Also binds non-histone proteins that are methylated on Lys residues: specifically recognizes and binds CGAS monomethylated on 'Lys-491'. May be involved in MYC-mediated oncogenic transformation. This Rattus norvegicus (Rat) protein is SAGA-associated factor 29.